Consider the following 634-residue polypeptide: ATP-dependent clpX-like chaperone, mitochondrial (634 aa).

Residues Met1–Arg56 constitute a mitochondrion transit peptide. The segment at Asp69 to Asn102 is disordered. Over residues Gly70–Val84 the composition is skewed to basic and acidic residues. Residues Thr85–Ser94 show a composition bias toward low complexity. One can recognise a ClpX-type ZB domain in the interval Ser94–Ile147. Zn(2+)-binding residues include Cys106, Cys109, Cys128, and Cys131. ATP is bound at residue Pro295 to Leu302. Lys438 carries the N6-acetyllysine modification. A compositionally biased stretch (basic and acidic residues) spans Lys599–Ser611. The disordered stretch occupies residues Lys599–Ser634. Positions Ser612 to Asp623 are enriched in acidic residues. A Phosphoserine modification is found at Ser618.

This sequence belongs to the ClpX chaperone family. As to quaternary structure, homohexamer that forms a ring structure; this hexamerization requires ATP binding. Component of the ClpXP complex formed by the assembly of two CLPP heptameric rings with two CLPX hexameric rings, giving rise to a symmetrical structure with two central CLPP rings flanked by a CLPX ring at either end of the complex. Interacts with TFAM. As to expression, detected in liver (at protein level).

It localises to the mitochondrion. The protein resides in the mitochondrion matrix. It is found in the mitochondrion nucleoid. It carries out the reaction ATP + H2O = ADP + phosphate + H(+). Functionally, ATP-dependent chaperone that functions as an unfoldase. As part of the ClpXP protease complex, it recognizes specific protein substrates, unfolds them using energy derived from ATP hydrolysis, and then translocates them to the proteolytic subunit (CLPP) of the ClpXP complex for degradation. Thanks to its chaperone activity, it also functions in the incorporation of the pyridoxal phosphate cofactor into 5-aminolevulinate synthase, thereby activating 5-aminolevulinate (ALA) synthesis, the first step in heme biosynthesis. This chaperone is also involved in the control of mtDNA nucleoid distribution, by regulating mitochondrial transcription factor A (TFAM) activity. The protein is ATP-dependent clpX-like chaperone, mitochondrial of Mus musculus (Mouse).